Consider the following 137-residue polypeptide: Small ribosomal subunit protein uS11 (137 aa).

Disordered stretches follow at residues 1 to 31 (MPPK…AAHI) and 117 to 137 (TISD…RRRV). The segment covering 12 to 21 (KTQKARRRDK) has biased composition (basic residues).

Belongs to the universal ribosomal protein uS11 family. In terms of assembly, part of the 30S ribosomal subunit. Interacts with proteins S7 and S18. Binds to IF-3.

Its function is as follows. Located on the platform of the 30S subunit, it bridges several disparate RNA helices of the 16S rRNA. Forms part of the Shine-Dalgarno cleft in the 70S ribosome. This is Small ribosomal subunit protein uS11 from Rhodococcus jostii (strain RHA1).